The primary structure comprises 178 residues: Large ribosomal subunit protein uL6 (178 aa).

It belongs to the universal ribosomal protein uL6 family. In terms of assembly, part of the 50S ribosomal subunit.

Its function is as follows. This protein binds to the 23S rRNA, and is important in its secondary structure. It is located near the subunit interface in the base of the L7/L12 stalk, and near the tRNA binding site of the peptidyltransferase center. The sequence is that of Large ribosomal subunit protein uL6 from Staphylococcus saprophyticus subsp. saprophyticus (strain ATCC 15305 / DSM 20229 / NCIMB 8711 / NCTC 7292 / S-41).